The following is a 193-amino-acid chain: Potassium-transporting ATPase KdpC subunit (193 aa).

The chain crosses the membrane as a helical span at residues 14–34; sequence ITFTFLVLCGLVYPLIVTGIA.

It belongs to the KdpC family. As to quaternary structure, the system is composed of three essential subunits: KdpA, KdpB and KdpC.

The protein localises to the cell membrane. In terms of biological role, part of the high-affinity ATP-driven potassium transport (or Kdp) system, which catalyzes the hydrolysis of ATP coupled with the electrogenic transport of potassium into the cytoplasm. This subunit acts as a catalytic chaperone that increases the ATP-binding affinity of the ATP-hydrolyzing subunit KdpB by the formation of a transient KdpB/KdpC/ATP ternary complex. This is Potassium-transporting ATPase KdpC subunit from Bacillus cereus (strain AH820).